A 338-amino-acid polypeptide reads, in one-letter code: Anthranilate phosphoribosyltransferase (338 aa).

5-phospho-alpha-D-ribose 1-diphosphate contacts are provided by residues G81, 84 to 85 (GD), S89, 91 to 94 (NIST), 109 to 117 (KHGNRSVSS), and S121. Anthranilate is bound at residue G81. S93 is a Mg(2+) binding site. Anthranilate is bound at residue N112. R167 is an anthranilate binding site. Mg(2+) contacts are provided by D226 and E227.

The protein belongs to the anthranilate phosphoribosyltransferase family. In terms of assembly, homodimer. The cofactor is Mg(2+).

It catalyses the reaction N-(5-phospho-beta-D-ribosyl)anthranilate + diphosphate = 5-phospho-alpha-D-ribose 1-diphosphate + anthranilate. Its pathway is amino-acid biosynthesis; L-tryptophan biosynthesis; L-tryptophan from chorismate: step 2/5. In terms of biological role, catalyzes the transfer of the phosphoribosyl group of 5-phosphorylribose-1-pyrophosphate (PRPP) to anthranilate to yield N-(5'-phosphoribosyl)-anthranilate (PRA). The sequence is that of Anthranilate phosphoribosyltransferase from Thioalkalivibrio sulfidiphilus (strain HL-EbGR7).